The sequence spans 144 residues: FK506-binding protein 2 (144 aa).

A signal peptide spans 1 to 20; it reads MARIIVLIVAFMALIAGVFA. The region spanning 48–136 is the PPIase FKBP-type domain; that stretch reads GDTVSVHYTG…IFTTELVSID (89 aa). The short motif at 141-144 is the Prevents secretion from ER element; the sequence is RDEL.

This sequence belongs to the FKBP-type PPIase family. FKBP2 subfamily.

The protein localises to the endoplasmic reticulum. It catalyses the reaction [protein]-peptidylproline (omega=180) = [protein]-peptidylproline (omega=0). With respect to regulation, inhibited by both FK506 and rapamycin. Functionally, PPIases accelerate the folding of proteins. It catalyzes the cis-trans isomerization of proline imidic peptide bonds in oligopeptides. The chain is FK506-binding protein 2 (FPR2) from Yarrowia lipolytica (strain CLIB 122 / E 150) (Yeast).